Reading from the N-terminus, the 261-residue chain is uncharacterized protein (261 aa).

A signal peptide spans 1–22; that stretch reads MRDSKRVVLYISIMVLSIFIIG. Cys-23 is lipidated: N-palmitoyl cysteine. Cys-23 is lipidated: S-diacylglycerol cysteine.

The protein belongs to the staphylococcal tandem lipoprotein family.

The protein resides in the cell membrane. This is an uncharacterized protein from Staphylococcus aureus (strain N315).